Consider the following 273-residue polypeptide: Cell division cycle-associated protein 3 (273 aa).

2 disordered regions span residues methionine 1–glutamate 231 and glycine 251–serine 273. Serine 29 and serine 31 each carry phosphoserine. Residues alanine 32–proline 45 show a composition bias toward polar residues. Threonine 37 is modified (phosphothreonine). Phosphoserine occurs at positions 44 and 67. Threonine 75 carries the phosphothreonine modification. Positions lysine 90–serine 124 are F-box-like. Serine 93 is subject to Phosphoserine. Residues glutamate 94 to valine 105 are compositionally biased toward acidic residues. Composition is skewed to polar residues over residues proline 144–glutamine 154 and serine 164–aspartate 175. Phosphoserine is present on serine 204. Threonine 207 bears the Phosphothreonine mark. The span at glutamine 210–leucine 220 shows a compositional bias: polar residues. Phosphoserine is present on serine 214. Residue threonine 217 is modified to Phosphothreonine. The short motif at lysine 263–asparagine 265 is the KEN box element.

Interacts with SKP1. Part of a SCF (SKP1-cullin-F-box) protein ligase complex. Ubiquitinated and degraded by the APC/C-Cdh1 complex.

Its subcellular location is the cytoplasm. It localises to the cytosol. It participates in protein modification; protein ubiquitination. In terms of biological role, F-box-like protein which is required for entry into mitosis. Acts by participating in E3 ligase complexes that mediate the ubiquitination and degradation of WEE1 kinase at G2/M phase. This is Cell division cycle-associated protein 3 (Cdca3) from Rattus norvegicus (Rat).